The sequence spans 248 residues: Transcription factor MYBC1 (248 aa).

A DNA-binding region (myb-like GARP) is located at residues 102–161; that stretch reads TLKRPRLVWTPQLHKRFVDAVGHLGIKNAVPKTIMQLMSVEGLTRENVASHLQKYRLYLR.

As to expression, expressed in roots, leaves, stems, petioles, filaments, stigma, pedicels, sepals, anthers, petals, and siliques.

The protein localises to the nucleus. Its function is as follows. Probable transcription factor that acts as a negative regulator of freezing tolerance via a CBF-independent pathway. The sequence is that of Transcription factor MYBC1 from Arabidopsis thaliana (Mouse-ear cress).